A 429-amino-acid chain; its full sequence is Serine hydroxymethyltransferase (429 aa).

Residues leucine 126 and 130-132 contribute to the (6S)-5,6,7,8-tetrahydrofolate site; that span reads GHL. Lysine 235 carries the post-translational modification N6-(pyridoxal phosphate)lysine. Residue 359-361 coordinates (6S)-5,6,7,8-tetrahydrofolate; it reads SPF.

It belongs to the SHMT family. In terms of assembly, homodimer. Pyridoxal 5'-phosphate serves as cofactor.

It localises to the cytoplasm. It catalyses the reaction (6R)-5,10-methylene-5,6,7,8-tetrahydrofolate + glycine + H2O = (6S)-5,6,7,8-tetrahydrofolate + L-serine. The protein operates within one-carbon metabolism; tetrahydrofolate interconversion. It participates in amino-acid biosynthesis; glycine biosynthesis; glycine from L-serine: step 1/1. Catalyzes the reversible interconversion of serine and glycine with tetrahydrofolate (THF) serving as the one-carbon carrier. This reaction serves as the major source of one-carbon groups required for the biosynthesis of purines, thymidylate, methionine, and other important biomolecules. Also exhibits THF-independent aldolase activity toward beta-hydroxyamino acids, producing glycine and aldehydes, via a retro-aldol mechanism. The protein is Serine hydroxymethyltransferase of Prochlorococcus marinus (strain MIT 9313).